Here is a 95-residue protein sequence, read N- to C-terminus: Aspartyl/glutamyl-tRNA(Asn/Gln) amidotransferase subunit C (95 aa).

It belongs to the GatC family. As to quaternary structure, heterotrimer of A, B and C subunits.

The enzyme catalyses L-glutamyl-tRNA(Gln) + L-glutamine + ATP + H2O = L-glutaminyl-tRNA(Gln) + L-glutamate + ADP + phosphate + H(+). The catalysed reaction is L-aspartyl-tRNA(Asn) + L-glutamine + ATP + H2O = L-asparaginyl-tRNA(Asn) + L-glutamate + ADP + phosphate + 2 H(+). In terms of biological role, allows the formation of correctly charged Asn-tRNA(Asn) or Gln-tRNA(Gln) through the transamidation of misacylated Asp-tRNA(Asn) or Glu-tRNA(Gln) in organisms which lack either or both of asparaginyl-tRNA or glutaminyl-tRNA synthetases. The reaction takes place in the presence of glutamine and ATP through an activated phospho-Asp-tRNA(Asn) or phospho-Glu-tRNA(Gln). The polypeptide is Aspartyl/glutamyl-tRNA(Asn/Gln) amidotransferase subunit C (Methylocella silvestris (strain DSM 15510 / CIP 108128 / LMG 27833 / NCIMB 13906 / BL2)).